The following is a 180-amino-acid chain: MSKVEAQIEKIFTSFDKDGDGNLSWDEVFSRMSSNSNIKDPLAATKSMFDHYNRDADTENLSIQEIREVLMSKKIKQDLIRTEKALRSKVKDFRKKYDTDNDGVVTFDEMYQLYLKDPDFDEEDDELSAEEREKAKCRRAKSSCRYFFSAVDKDKNDKLSYLEIHEYLKKHPEFDLGPSQ.

EF-hand domains are found at residues 3-38 (KVEAQIEKIFTSFDKDGDGNLSWDEVFSRMSSNSNI), 40-76 (DPLAATKSMFDHYNRDADTENLSIQEIREVLMSKKIK), 85-120 (ALRSKVKDFRKKYDTDNDGVVTFDEMYQLYLKDPDF), and 139-174 (RAKSSCRYFFSAVDKDKNDKLSYLEIHEYLKKHPEF). Asp-16, Asp-18, Asp-20, Asn-22, and Glu-27 together coordinate Ca(2+). 9 residues coordinate Ca(2+): Asp-98, Asp-100, Asp-102, Glu-109, Asp-152, Asp-154, Asn-156, Lys-158, and Glu-163.

The polypeptide is Calcium-binding protein E (cbpE) (Dictyostelium discoideum (Social amoeba)).